The following is a 584-amino-acid chain: Pectinesterase 1 (584 aa).

Positions Met1–Ala42 are cleaved as a signal peptide. Residues Asn108, Asn129, and Asn226 are each glycosylated (N-linked (GlcNAc...) asparagine). Positions 348 and 378 each coordinate substrate. Residue Asp401 is the Proton donor of the active site. Cys415 and Cys435 form a disulfide bridge. The active-site Nucleophile is Asp422. The substrate site is built by Arg490 and Trp492.

The protein in the N-terminal section; belongs to the PMEI family. In the C-terminal section; belongs to the pectinesterase family. Expressed at high levels in flower buds, shoots and young leaves, and at lower levels in young fruit, young bark and juice vesicles. Not expressed at significant levels in leaf abscission zones following ethylene treatment or in mature leaves. In fruit abscission zones, expression was initially undetectable but increased markedly following ethylene treatment.

Its subcellular location is the secreted. It is found in the cell wall. It catalyses the reaction [(1-&gt;4)-alpha-D-galacturonosyl methyl ester](n) + n H2O = [(1-&gt;4)-alpha-D-galacturonosyl](n) + n methanol + n H(+). It functions in the pathway glycan metabolism; pectin degradation; 2-dehydro-3-deoxy-D-gluconate from pectin: step 1/5. Functionally, acts in the modification of cell walls via demethylesterification of cell wall pectin. This Citrus sinensis (Sweet orange) protein is Pectinesterase 1 (PECS-1.1).